Consider the following 300-residue polypeptide: NAD kinase (300 aa).

Catalysis depends on Asp75, which acts as the Proton acceptor. NAD(+) is bound by residues 75-76 (DG), 149-150 (ND), Arg177, Asp179, 190-195 (TAYALS), Ala214, and Gln248.

It belongs to the NAD kinase family. A divalent metal cation is required as a cofactor.

It localises to the cytoplasm. It carries out the reaction NAD(+) + ATP = ADP + NADP(+) + H(+). Involved in the regulation of the intracellular balance of NAD and NADP, and is a key enzyme in the biosynthesis of NADP. Catalyzes specifically the phosphorylation on 2'-hydroxyl of the adenosine moiety of NAD to yield NADP. The sequence is that of NAD kinase from Burkholderia cenocepacia (strain HI2424).